A 363-amino-acid chain; its full sequence is Phosphoserine aminotransferase (363 aa).

Arg41 is a binding site for L-glutamate. Pyridoxal 5'-phosphate is bound by residues 75-76 (AS), Trp100, Thr155, Asp175, and Gln198. Lys199 carries the post-translational modification N6-(pyridoxal phosphate)lysine. 239 to 240 (NT) is a pyridoxal 5'-phosphate binding site.

It belongs to the class-V pyridoxal-phosphate-dependent aminotransferase family. SerC subfamily. As to quaternary structure, homodimer. Requires pyridoxal 5'-phosphate as cofactor.

It localises to the cytoplasm. It catalyses the reaction O-phospho-L-serine + 2-oxoglutarate = 3-phosphooxypyruvate + L-glutamate. It carries out the reaction 4-(phosphooxy)-L-threonine + 2-oxoglutarate = (R)-3-hydroxy-2-oxo-4-phosphooxybutanoate + L-glutamate. The protein operates within amino-acid biosynthesis; L-serine biosynthesis; L-serine from 3-phospho-D-glycerate: step 2/3. In terms of biological role, catalyzes the reversible conversion of 3-phosphohydroxypyruvate to phosphoserine and of 3-hydroxy-2-oxo-4-phosphonooxybutanoate to phosphohydroxythreonine. This chain is Phosphoserine aminotransferase, found in Streptococcus agalactiae serotype III (strain NEM316).